A 923-amino-acid chain; its full sequence is MGRGTGELGRAERLPVLFLFLLSLFCPALCEQIRYRIPEEMPKGSVVGNLATDLGFSVQELPTRKLRVSSEKPYFTVSAESGELLVSSRLDREEICGKKPACALEFEAVAENPLNFYHVNVEIEDINDHTPKFTQNSFELQISESAQPGTRFILEVAEDADIGLNSLQKYKLSLNPSFSLIIKEKQDGSKYPELALEKTLDREQQSYHRLVLTALDGGNPPLSGTTELRIQVTDANDNPPVFNRDVYRVSLRENVPPGTTVLQVSATDQDEGINSEITYSFYRTGQIFSLNSKSGEITTQKKLDFEETKEYSMVVEGRDGGGLVAQCTVEINIQDENDNSPEVTFHSLLEMILENAVPGTLIALIKIHDQDSGENGEVNCQLQGEVPFKIISSSKNSYKLVTDGTLDREQTPEYNVTITATDRGKPPLSSSISVILHIRDVNDNAPVFHQASYLVSVPENNPPGASIAQVCASDLDLGLNGQVSYSIMASDLEPLALASYVSMSAQSGVVFAQRAFDYEQLRTFELTLQARDQGSPALSANVSLRVLVGDRNDNAPRVLYPALGPDGSALFDMVPRAAEPGYLVTKVVAVDADSGHNAWLSYHVLHASEPGLFSLGLRTGEVRTARALGDRDAARQRLLVAVRDGGQPPLSATATLHLVFADSLQEVLPDITDRPVPSDPQAELQFYLVVALALISVLFLLAVILAIALRLRRSSSPAAWSCFQPGLCVKSGPVVPPNYSEGTLPYSYNLCVAHTGKTEFNFLKCSEQLSSEQDILCGDSSGALFPLCNSSESTSHPELQAPPNTDWRFSQAQRPGTSGSQNGDDTGTWPNNQFDTEMLQAMILASASEAADGSSTLGGGAGTMGLSARYGPQFTLQHVPDYRQNVYIPGSNATLTNAAGKRDGKAPAGGNGNKKKSGKKEKK.

Positions 1 to 30 are cleaved as a signal peptide; that stretch reads MGRGTGELGRAERLPVLFLFLLSLFCPALC. Cadherin domains are found at residues 31 to 133, 134 to 242, 243 to 343, 344 to 448, 449 to 558, and 566 to 671; these read EQIR…TPKF, TQNS…PPVF, NRDV…SPEV, TFHS…APVF, HQAS…APRV, and DGSA…LPDI. The Extracellular segment spans residues 31 to 687; it reads EQIRYRIPEE…SDPQAELQFY (657 aa). N415 and N541 each carry an N-linked (GlcNAc...) asparagine glycan. The helical transmembrane segment at 688–708 threads the bilayer; the sequence is LVVALALISVLFLLAVILAIA. At 709–923 the chain is on the cytoplasmic side; that stretch reads LRLRRSSSPA…KKKSGKKEKK (215 aa). 2 disordered regions span residues 794–832 and 893–923; these read TSHP…WPNN and ATLT…KEKK. Polar residues predominate over residues 807–832; it reads WRFSQAQRPGTSGSQNGDDTGTWPNN. Residues 913-923 are compositionally biased toward basic residues; that stretch reads NKKKSGKKEKK.

It is found in the cell membrane. Functionally, potential calcium-dependent cell-adhesion protein. May be involved in the establishment and maintenance of specific neuronal connections in the brain. The sequence is that of Protocadherin gamma-B5 (PCDHGB5) from Pan troglodytes (Chimpanzee).